We begin with the raw amino-acid sequence, 819 residues long: Cadherin-24 (819 aa).

The N-terminal stretch at 1–19 (MWGLVRLLLAWLGGWGCMG) is a signal peptide. Positions 21–44 (LAAPARAWAGSREHPGPALLRTRR) are excised as a propeptide. At 45–641 (SWVWNQFFVI…LSAAGLSTGA (597 aa)) the chain is on the extracellular side. Cadherin domains are found at residues 46-150 (WVWN…PPIF), 151-259 (PLGP…PPKF), 260-374 (PQSL…PPAF), 375-517 (TQAA…APQL), and 517-630 (LAEP…WPEA). Residues Asn-446, Asn-548, and Asn-563 are each glycosylated (N-linked (GlcNAc...) asparagine). Residues 642-662 (LLAIITCVGALLALVVLFVAL) form a helical membrane-spanning segment. Residues 663 to 819 (RRQKQEALMV…LYGAKEPPAP (157 aa)) are Cytoplasmic-facing. A disordered region spans residues 768 to 800 (YEGRGSSCGSLSSLGSGSEAGGAPGPAEPLDDW). Over residues 771–784 (RGSSCGSLSSLGSG) the composition is skewed to low complexity.

As to quaternary structure, associates with alpha-, beta- and delta-catenins.

It localises to the cell membrane. Its function is as follows. Cadherins are calcium-dependent cell adhesion proteins. They preferentially interact with themselves in a homophilic manner in connecting cells; cadherins may thus contribute to the sorting of heterogeneous cell types. Cadherin-24 mediate strong cell-cell adhesion. This chain is Cadherin-24 (CDH24), found in Homo sapiens (Human).